The following is a 488-amino-acid chain: Palmitoleoyl-protein carboxylesterase notum1 (488 aa).

An N-terminal signal peptide occupies residues 1 to 20 (MAGALCVTLLLLLSTNTVSG). Asn-90 is a glycosylation site (N-linked (GlcNAc...) asparagine). Catalysis depends on charge relay system residues Ser-226, Asp-334, and His-383.

Belongs to the pectinacetylesterase family. Notum subfamily. As to expression, expressed in the egg and through cleavage to gastrulation stages. Enriched in the animal (prospective ectoderm) and dorsal regions in early gastrula. Shows a dynamic expression during embryogenesis, in particular during neural induction and antero-posterior (AP) patterning.

It is found in the secreted. It catalyses the reaction [Wnt protein]-O-(9Z)-hexadecenoyl-L-serine + H2O = [Wnt protein]-L-serine + (9Z)-hexadecenoate + H(+). In terms of biological role, carboxylesterase that acts as a key negative regulator of the Wnt signaling pathway by specifically mediating depalmitoleoylation of WNT proteins. Serine palmitoleoylation of WNT proteins is required for efficient binding to frizzled receptors. Functions in the prospective ectoderm and is required for neural induction. In Xenopus laevis (African clawed frog), this protein is Palmitoleoyl-protein carboxylesterase notum1.